A 476-amino-acid polypeptide reads, in one-letter code: tRNA sulfurtransferase (476 aa).

One can recognise a THUMP domain in the interval 54 to 156 (AENDIPLSKV…GKDALIYDKI (103 aa)). ATP contacts are provided by residues 174 to 175 (MV), Lys256, Gly278, and Gln287. Cys334 and Cys433 are disulfide-bonded. In terms of domain architecture, Rhodanese spans 388–470 (NLEDAVFIDL…LSKQKGSVDE (83 aa)). Residue Cys433 is the Cysteine persulfide intermediate of the active site.

It belongs to the ThiI family.

The protein localises to the cytoplasm. The enzyme catalyses [ThiI sulfur-carrier protein]-S-sulfanyl-L-cysteine + a uridine in tRNA + 2 reduced [2Fe-2S]-[ferredoxin] + ATP + H(+) = [ThiI sulfur-carrier protein]-L-cysteine + a 4-thiouridine in tRNA + 2 oxidized [2Fe-2S]-[ferredoxin] + AMP + diphosphate. The catalysed reaction is [ThiS sulfur-carrier protein]-C-terminal Gly-Gly-AMP + S-sulfanyl-L-cysteinyl-[cysteine desulfurase] + AH2 = [ThiS sulfur-carrier protein]-C-terminal-Gly-aminoethanethioate + L-cysteinyl-[cysteine desulfurase] + A + AMP + 2 H(+). It functions in the pathway cofactor biosynthesis; thiamine diphosphate biosynthesis. Its function is as follows. Catalyzes the ATP-dependent transfer of a sulfur to tRNA to produce 4-thiouridine in position 8 of tRNAs, which functions as a near-UV photosensor. Also catalyzes the transfer of sulfur to the sulfur carrier protein ThiS, forming ThiS-thiocarboxylate. This is a step in the synthesis of thiazole, in the thiamine biosynthesis pathway. The sulfur is donated as persulfide by IscS. In Thermoplasma volcanium (strain ATCC 51530 / DSM 4299 / JCM 9571 / NBRC 15438 / GSS1), this protein is tRNA sulfurtransferase.